The following is a 219-amino-acid chain: Flagellin A (219 aa).

The propeptide occupies 1 to 12 (MKVKEFMNNKKG). 2 N-linked (GlcNAc...) asparagine glycosylation sites follow: Asn-38 and Asn-175.

Belongs to the archaeal flagellin family. N-linked glycans consist of the 779 Da trisaccharide beta-ManNAc(Thr)-(1-4)-beta-GlcNAc3NAcA-(1-3)-beta-GlcNAc.

Its subcellular location is the archaeal flagellum. Its function is as follows. Flagellin is the subunit protein which polymerizes to form the filaments of archaeal flagella. The sequence is that of Flagellin A (flaA) from Methanococcus voltae.